The sequence spans 262 residues: Zinc import ATP-binding protein ZnuC (262 aa).

The ABC transporter domain occupies 4-220 (LNLSGVRLSH…PEYLALFGPR (217 aa)). 36–43 (GPNGAGKS) is an ATP binding site. The disordered stretch occupies residues 238 to 262 (ADGSVLPLAEGGGEPHTHGPGCRHG).

This sequence belongs to the ABC transporter superfamily. Zinc importer (TC 3.A.1.15.5) family. In terms of assembly, the complex is composed of two ATP-binding proteins (ZnuC), two transmembrane proteins (ZnuB) and a solute-binding protein (ZnuA).

The protein resides in the cell inner membrane. It carries out the reaction Zn(2+)(out) + ATP(in) + H2O(in) = Zn(2+)(in) + ADP(in) + phosphate(in) + H(+)(in). Functionally, part of the ABC transporter complex ZnuABC involved in zinc import. Responsible for energy coupling to the transport system. The chain is Zinc import ATP-binding protein ZnuC from Paramagnetospirillum magneticum (strain ATCC 700264 / AMB-1) (Magnetospirillum magneticum).